The chain runs to 226 residues: Glyceraldehyde 3-phosphate phosphatase (226 aa).

It belongs to the HAD-like hydrolase superfamily. Mg(2+) serves as cofactor.

In terms of biological role, catalyzes the dephosphorylation of D,L-glyceraldehyde 3-phosphate in vitro. The sequence is that of Glyceraldehyde 3-phosphate phosphatase from Methanothermobacter thermautotrophicus (strain ATCC 29096 / DSM 1053 / JCM 10044 / NBRC 100330 / Delta H) (Methanobacterium thermoautotrophicum).